Reading from the N-terminus, the 134-residue chain is Large-conductance mechanosensitive channel (134 aa).

2 consecutive transmembrane segments (helical) span residues 16 to 36 (VIDLAVGVVIGAAFGKIVTAL) and 84 to 104 (INTLIQFVIVAFAIFLVIKVI).

The protein belongs to the MscL family. As to quaternary structure, homopentamer.

It localises to the cell inner membrane. Its function is as follows. Channel that opens in response to stretch forces in the membrane lipid bilayer. May participate in the regulation of osmotic pressure changes within the cell. The polypeptide is Large-conductance mechanosensitive channel (Stenotrophomonas maltophilia (strain R551-3)).